The chain runs to 485 residues: Bindin (485 aa).

Residues 1 to 20 form the signal peptide; it reads MGFHQISVIIVVLALASARA. A propeptide spanning residues 21–247 is cleaved from the precursor; it reads ADEFPSHTDT…DSERGARKKR (227 aa). Disordered regions lie at residues 157-195, 219-273, and 305-331; these read GETR…DLAP, ISGH…PAQQ, and GGGQ…SDSL. The segment covering 172-192 has biased composition (basic and acidic residues); the sequence is DVSKRASPRKGDEPAGHKLKD. Residues 250–264 show a composition bias toward polar residues; the sequence is NQGNYPQAMNPQSRG. Residues 317-331 show a composition bias toward acidic residues; that stretch reads AEADNADYDEYSDSL. A fucose-binding domain region spans residues 371–379; the sequence is LRHLRHHSN. Positions 459–485 are disordered; sequence QQGMGGVPQRMGGQPQGNAYNQGYRQG. A compositionally biased stretch (low complexity) spans 465-475; the sequence is VPQRMGGQPQG. Positions 476 to 485 are enriched in polar residues; it reads NAYNQGYRQG.

It belongs to the bindin family.

Its subcellular location is the cytoplasmic vesicle. The protein localises to the secretory vesicle. The protein resides in the acrosome lumen. Species-specific sea urchin sperm protein required for adhesion of sperm to the egg surface during fertilization. Bindin coats the acrosomal process after it is externalized by the acrosome reaction. It binds to sulfated, fucose-containing polysaccharides on the vitelline layer receptor proteoglycans which cover the egg plasma membrane. The protein is Bindin of Mesocentrotus franciscanus (Giant red sea urchin).